The sequence spans 608 residues: Protein FAM151A (608 aa).

The chain crosses the membrane as a helical span at residues 14–34 (WILAGSVSMTLVLAISMILGL). Positions 588-608 (RHRPSSRTGPSYVEGFPGESR) are disordered.

It belongs to the menorin family.

The protein resides in the membrane. In Rattus norvegicus (Rat), this protein is Protein FAM151A (Fam151a).